Consider the following 259-residue polypeptide: Putative aldolase class 2 protein PA3430 (259 aa).

Zn(2+)-binding residues include H113, H115, and H176.

The protein belongs to the aldolase class II family. Requires Zn(2+) as cofactor.

The protein is Putative aldolase class 2 protein PA3430 of Pseudomonas aeruginosa (strain ATCC 15692 / DSM 22644 / CIP 104116 / JCM 14847 / LMG 12228 / 1C / PRS 101 / PAO1).